The chain runs to 450 residues: Ribosomal protein uS12 methylthiotransferase RimO (450 aa).

An MTTase N-terminal domain is found at 9-124 (NRINVVTLGC…LLSALEADYK (116 aa)). Positions 18, 53, 87, 148, 152, and 155 each coordinate [4Fe-4S] cluster. The Radical SAM core domain maps to 134 to 365 (TTPKNYAYLK…EIQSQISWEL (232 aa)). One can recognise a TRAM domain in the interval 367 to 434 (QQKIGEVFNV…DFDLYGEPLN (68 aa)).

Belongs to the methylthiotransferase family. RimO subfamily. It depends on [4Fe-4S] cluster as a cofactor.

Its subcellular location is the cytoplasm. It catalyses the reaction L-aspartate(89)-[ribosomal protein uS12]-hydrogen + (sulfur carrier)-SH + AH2 + 2 S-adenosyl-L-methionine = 3-methylsulfanyl-L-aspartate(89)-[ribosomal protein uS12]-hydrogen + (sulfur carrier)-H + 5'-deoxyadenosine + L-methionine + A + S-adenosyl-L-homocysteine + 2 H(+). In terms of biological role, catalyzes the methylthiolation of an aspartic acid residue of ribosomal protein uS12. In Christiangramia forsetii (strain DSM 17595 / CGMCC 1.15422 / KT0803) (Gramella forsetii), this protein is Ribosomal protein uS12 methylthiotransferase RimO.